The chain runs to 512 residues: Dihydroniloticin synthase CYP71CD2 (512 aa).

Residues 1–21 traverse the membrane as a helical segment; it reads MNLQLDYFSITSFLVFLVVLF. N436 serves as a coordination point for heme.

Belongs to the cytochrome P450 family. Heme is required as a cofactor. Mainly expressed in petioles and roots, and, to a lower extent, in leaves.

It localises to the membrane. The enzyme catalyses tirucalla-7,24-dien-3beta-ol + 2 reduced [NADPH--hemoprotein reductase] + 2 O2 = dihydroniloticin + 2 oxidized [NADPH--hemoprotein reductase] + 2 H2O + 2 H(+). It functions in the pathway secondary metabolite biosynthesis; terpenoid biosynthesis. In terms of biological role, monooxygenase involved in the biosynthesis of limonoids triterpene natural products such as azadirachtin, an antifeedant widely used as bioinsecticide, and possessing many medicinal applications including anti-tumoral, anti-malarial, anti-rheumatic, antibacterial, anti-inflammatory, anti-pyretic and diuretic effects. Catalyzes the conversion of tirucalladienol to dihydroniloticin. The polypeptide is Dihydroniloticin synthase CYP71CD2 (Melia azedarach (Chinaberry tree)).